The sequence spans 129 residues: S-adenosylmethionine decarboxylase proenzyme (129 aa).

Serine 63 acts as the Schiff-base intermediate with substrate; via pyruvic acid in catalysis. Serine 63 carries the pyruvic acid (Ser); by autocatalysis modification. Histidine 68 functions as the Proton acceptor; for processing activity in the catalytic mechanism. Residue cysteine 83 is the Proton donor; for catalytic activity of the active site.

Belongs to the prokaryotic AdoMetDC family. Type 1 subfamily. Heterotetramer of two alpha and two beta chains arranged as a dimer of alpha/beta heterodimers. It depends on pyruvate as a cofactor. Post-translationally, is synthesized initially as an inactive proenzyme. Formation of the active enzyme involves a self-maturation process in which the active site pyruvoyl group is generated from an internal serine residue via an autocatalytic post-translational modification. Two non-identical subunits are generated from the proenzyme in this reaction, and the pyruvate is formed at the N-terminus of the alpha chain, which is derived from the carboxyl end of the proenzyme. The post-translation cleavage follows an unusual pathway, termed non-hydrolytic serinolysis, in which the side chain hydroxyl group of the serine supplies its oxygen atom to form the C-terminus of the beta chain, while the remainder of the serine residue undergoes an oxidative deamination to produce ammonia and the pyruvoyl group blocking the N-terminus of the alpha chain.

The catalysed reaction is S-adenosyl-L-methionine + H(+) = S-adenosyl 3-(methylsulfanyl)propylamine + CO2. The protein operates within amine and polyamine biosynthesis; S-adenosylmethioninamine biosynthesis; S-adenosylmethioninamine from S-adenosyl-L-methionine: step 1/1. Functionally, catalyzes the decarboxylation of S-adenosylmethionine to S-adenosylmethioninamine (dcAdoMet), the propylamine donor required for the synthesis of the polyamines spermine and spermidine from the diamine putrescine. The sequence is that of S-adenosylmethionine decarboxylase proenzyme from Shouchella clausii (strain KSM-K16) (Alkalihalobacillus clausii).